Reading from the N-terminus, the 447-residue chain is Na(+)-translocating NADH-quinone reductase subunit A (447 aa).

It belongs to the NqrA family. As to quaternary structure, composed of six subunits; NqrA, NqrB, NqrC, NqrD, NqrE and NqrF.

It carries out the reaction a ubiquinone + n Na(+)(in) + NADH + H(+) = a ubiquinol + n Na(+)(out) + NAD(+). NQR complex catalyzes the reduction of ubiquinone-1 to ubiquinol by two successive reactions, coupled with the transport of Na(+) ions from the cytoplasm to the periplasm. NqrA to NqrE are probably involved in the second step, the conversion of ubisemiquinone to ubiquinol. The polypeptide is Na(+)-translocating NADH-quinone reductase subunit A (Yersinia pestis bv. Antiqua (strain Angola)).